Here is a 234-residue protein sequence, read N- to C-terminus: Serum amyloid P-component (234 aa).

The N-terminal stretch at 1 to 22 (MDKLLSLLGVSILAGLLLEAFA) is a signal peptide. Positions 27–226 (TGKVFVFPRQ…YAVIRPRCVA (200 aa)) constitute a Pentraxin (PTX) domain. Residue Asn-54 is glycosylated (N-linked (GlcNAc...) asparagine). A disulfide bridge links Cys-58 with Cys-117. Residues Asn-81, Glu-158, Gln-159, Asp-160, and Gln-170 each contribute to the Ca(2+) site.

The protein belongs to the pentraxin family. As to quaternary structure, homopentamer. Pentraxin (or pentaxin) have a discoid arrangement of 5 non-covalently bound subunits. Ca(2+) is required as a cofactor.

The protein resides in the secreted. The chain is Serum amyloid P-component (APCS) from Mesocricetus auratus (Golden hamster).